A 252-amino-acid polypeptide reads, in one-letter code: Imidazole glycerol phosphate synthase subunit HisF (252 aa).

Active-site residues include Asp12 and Asp131.

The protein belongs to the HisA/HisF family. As to quaternary structure, heterodimer of HisH and HisF.

It is found in the cytoplasm. The catalysed reaction is 5-[(5-phospho-1-deoxy-D-ribulos-1-ylimino)methylamino]-1-(5-phospho-beta-D-ribosyl)imidazole-4-carboxamide + L-glutamine = D-erythro-1-(imidazol-4-yl)glycerol 3-phosphate + 5-amino-1-(5-phospho-beta-D-ribosyl)imidazole-4-carboxamide + L-glutamate + H(+). The protein operates within amino-acid biosynthesis; L-histidine biosynthesis; L-histidine from 5-phospho-alpha-D-ribose 1-diphosphate: step 5/9. In terms of biological role, IGPS catalyzes the conversion of PRFAR and glutamine to IGP, AICAR and glutamate. The HisF subunit catalyzes the cyclization activity that produces IGP and AICAR from PRFAR using the ammonia provided by the HisH subunit. This is Imidazole glycerol phosphate synthase subunit HisF from Thermus thermophilus (strain ATCC 27634 / DSM 579 / HB8).